We begin with the raw amino-acid sequence, 788 residues long: Protein translocase subunit SecA (788 aa).

Residues Q85, 103–107 (GEGKT), and D494 contribute to the ATP site.

Belongs to the SecA family. In terms of assembly, monomer and homodimer. Part of the essential Sec protein translocation apparatus which comprises SecA, SecYEG and auxiliary proteins SecDF. Other proteins may also be involved.

The protein resides in the cell membrane. Its subcellular location is the cytoplasm. It carries out the reaction ATP + H2O + cellular proteinSide 1 = ADP + phosphate + cellular proteinSide 2.. Its function is as follows. Part of the Sec protein translocase complex. Interacts with the SecYEG preprotein conducting channel. Has a central role in coupling the hydrolysis of ATP to the transfer of proteins into and across the cell membrane, serving as an ATP-driven molecular motor driving the stepwise translocation of polypeptide chains across the membrane. The sequence is that of Protein translocase subunit SecA from Oenococcus oeni (strain ATCC BAA-331 / PSU-1).